Consider the following 406-residue polypeptide: Elongation factor Tu (406 aa).

In terms of domain architecture, tr-type G spans 10-215 (KPHVNVGTIG…AIDEYIPTPV (206 aa)). The segment at 19–26 (GHVDHGKT) is G1. GTP is bound at residue 19–26 (GHVDHGKT). Thr-26 lines the Mg(2+) pocket. The segment at 61–65 (GITIN) is G2. The segment at 82 to 85 (DCPG) is G3. Residues 82 to 86 (DCPGH) and 137 to 140 (NKVD) each bind GTP. Positions 137-140 (NKVD) are G4. A G5 region spans residues 175 to 177 (SAL).

This sequence belongs to the TRAFAC class translation factor GTPase superfamily. Classic translation factor GTPase family. EF-Tu/EF-1A subfamily. Monomer.

It is found in the cytoplasm. It carries out the reaction GTP + H2O = GDP + phosphate + H(+). GTP hydrolase that promotes the GTP-dependent binding of aminoacyl-tRNA to the A-site of ribosomes during protein biosynthesis. The chain is Elongation factor Tu from Thermus thermophilus (strain ATCC BAA-163 / DSM 7039 / HB27).